The following is a 920-amino-acid chain: Isoleucine--tRNA ligase (920 aa).

A 'HIGH' region motif is present at residues 58-68 (PYANGHLHLGH). Position 569 (E569) interacts with L-isoleucyl-5'-AMP. Positions 610-614 (KMSKS) match the 'KMSKS' region motif. K613 contacts ATP. Residues C895, C898, C910, and C913 each contribute to the Zn(2+) site.

Belongs to the class-I aminoacyl-tRNA synthetase family. IleS type 1 subfamily. Monomer. Requires Zn(2+) as cofactor.

It localises to the cytoplasm. It catalyses the reaction tRNA(Ile) + L-isoleucine + ATP = L-isoleucyl-tRNA(Ile) + AMP + diphosphate. Catalyzes the attachment of isoleucine to tRNA(Ile). As IleRS can inadvertently accommodate and process structurally similar amino acids such as valine, to avoid such errors it has two additional distinct tRNA(Ile)-dependent editing activities. One activity is designated as 'pretransfer' editing and involves the hydrolysis of activated Val-AMP. The other activity is designated 'posttransfer' editing and involves deacylation of mischarged Val-tRNA(Ile). The polypeptide is Isoleucine--tRNA ligase (Helicobacter pylori (strain G27)).